The following is a 256-amino-acid chain: MNNIWWQTKGQGNVHLVLLHGWGLNAEVWRCIDEELSSHFTLHLVDLPGFGRSRGFGAMSLADMAEAVLRQAPDKAIWLGWSLGGLVASQIALTHPERVQALVTVASSPCFSARDEWPGIKPDVLAGFQQQLSDDFQRTVERFLALQTMGTETARQDARALKKTVLALPMPEVDVLNGGLEILKTVDLRQPLQNVFMPFLRLYGYLDGLVPRKVVPMLDKLWPHSESYIFAKAAHAPFISHPAEFCRMLVALKQRV.

One can recognise an AB hydrolase-1 domain in the interval 15–242; sequence HLVLLHGWGL…AAHAPFISHP (228 aa). Residues Trp-22, 82 to 83, and 143 to 147 each bind substrate; these read SL and FLALQ. The active-site Nucleophile is Ser-82. Residues Asp-207 and His-235 contribute to the active site. His-235 serves as a coordination point for substrate.

The protein belongs to the AB hydrolase superfamily. Carboxylesterase BioH family. In terms of assembly, monomer.

It is found in the cytoplasm. It catalyses the reaction 6-carboxyhexanoyl-[ACP] methyl ester + H2O = 6-carboxyhexanoyl-[ACP] + methanol + H(+). The protein operates within cofactor biosynthesis; biotin biosynthesis. The physiological role of BioH is to remove the methyl group introduced by BioC when the pimeloyl moiety is complete. It allows to synthesize pimeloyl-ACP via the fatty acid synthetic pathway through the hydrolysis of the ester bonds of pimeloyl-ACP esters. The protein is Pimeloyl-[acyl-carrier protein] methyl ester esterase of Escherichia coli O7:K1 (strain IAI39 / ExPEC).